The chain runs to 366 residues: 3-dehydroquinate synthase (366 aa).

NAD(+)-binding positions include 71–76 (DGEQYK), 105–109 (GVIGD), 129–130 (TT), lysine 142, lysine 151, and 169–172 (CLKT). Zn(2+) contacts are provided by glutamate 184, histidine 247, and histidine 264.

It belongs to the sugar phosphate cyclases superfamily. Dehydroquinate synthase family. Co(2+) is required as a cofactor. Requires Zn(2+) as cofactor. It depends on NAD(+) as a cofactor.

Its subcellular location is the cytoplasm. It catalyses the reaction 7-phospho-2-dehydro-3-deoxy-D-arabino-heptonate = 3-dehydroquinate + phosphate. Its pathway is metabolic intermediate biosynthesis; chorismate biosynthesis; chorismate from D-erythrose 4-phosphate and phosphoenolpyruvate: step 2/7. Catalyzes the conversion of 3-deoxy-D-arabino-heptulosonate 7-phosphate (DAHP) to dehydroquinate (DHQ). The chain is 3-dehydroquinate synthase from Serratia proteamaculans (strain 568).